The primary structure comprises 411 residues: Serine hydroxymethyltransferase (411 aa).

120 to 122 is a binding site for (6S)-5,6,7,8-tetrahydrofolate; it reads GHL. N6-(pyridoxal phosphate)lysine is present on K225. Residue 350-352 coordinates (6S)-5,6,7,8-tetrahydrofolate; the sequence is SPF.

It belongs to the SHMT family. Homodimer. It depends on pyridoxal 5'-phosphate as a cofactor.

The protein resides in the cytoplasm. It catalyses the reaction (6R)-5,10-methylene-5,6,7,8-tetrahydrofolate + glycine + H2O = (6S)-5,6,7,8-tetrahydrofolate + L-serine. It functions in the pathway one-carbon metabolism; tetrahydrofolate interconversion. The protein operates within amino-acid biosynthesis; glycine biosynthesis; glycine from L-serine: step 1/1. In terms of biological role, catalyzes the reversible interconversion of serine and glycine with tetrahydrofolate (THF) serving as the one-carbon carrier. This reaction serves as the major source of one-carbon groups required for the biosynthesis of purines, thymidylate, methionine, and other important biomolecules. Also exhibits THF-independent aldolase activity toward beta-hydroxyamino acids, producing glycine and aldehydes, via a retro-aldol mechanism. The chain is Serine hydroxymethyltransferase from Lactobacillus gasseri (strain ATCC 33323 / DSM 20243 / BCRC 14619 / CIP 102991 / JCM 1131 / KCTC 3163 / NCIMB 11718 / NCTC 13722 / AM63).